Reading from the N-terminus, the 196-residue chain is Superantigen-like protein 11 (196 aa).

The interval 65–167 is sialyl Lewis X-binding; that stretch reads LDVFVVREGS…RVTMKNGDFY (103 aa).

The protein belongs to the staphylococcal/streptococcal toxin family. As to quaternary structure, homodimer (via its C-terminal domain). Interacts with host FCAR and SELPLG (via sialyl Lewis X).

The protein localises to the secreted. In terms of biological role, secreted protein that plays a role in the inhibition of host immune system. Targets myeloid cells such as monocytes or granulocytes through binding with sialyllactosamine-containing glycoproteins. Prevents initial rolling of neutrophils toward the site of infection by interacting with host SELPLG. Disrupts neutrophil motility by induction of cell adhesion via interacting with glycans but independently of SELPLG. The protein is Superantigen-like protein 11 of Staphylococcus aureus.